We begin with the raw amino-acid sequence, 230 residues long: Protein FAM3A (230 aa).

The first 33 residues, 1-33, serve as a signal peptide directing secretion; sequence MRLAGPLRIVVLVVSVGVTWIVVSILLGGPGSG. 2 disulfide bridges follow: C59-C87 and C65-C222. Residues 68-226 form the GG-type lectin domain; the sequence is EHLAFRVVSG…LEMEGCIPRR (159 aa).

It belongs to the FAM3 family. In terms of tissue distribution, in similar amounts in testis, pancreas, adrenal, placenta, brain, fetal brain, liver, kidney, skeletal muscle and heart.

The protein localises to the secreted. Its function is as follows. May act as a defensin against invading fungal microorganisms. This is Protein FAM3A (FAM3A) from Homo sapiens (Human).